The sequence spans 1482 residues: Glutamate receptor ionotropic, NMDA 2B (1482 aa).

The signal sequence occupies residues 1–26 (MKPSAECCSPKFWLVLAVLAVSGSKA). Topologically, residues 27–557 (RSQKSAPSIG…SAFLEPFSAD (531 aa)) are extracellular. N-linked (GlcNAc...) asparagine glycosylation occurs at Asn74. Residues Cys86 and Cys321 are joined by a disulfide bond. 2 residues coordinate Zn(2+): His127 and Glu284. Asn341, Asn348, Asn444, and Asn491 each carry an N-linked (GlcNAc...) asparagine glycan. Disulfide bonds link Cys429/Cys456 and Cys436/Cys457. Positions 514 and 519 each coordinate L-glutamate. An N-linked (GlcNAc...) asparagine glycan is attached at Asn542. The helical transmembrane segment at 558 to 576 (VWVMMFVMLLIVSAVAVFV) threads the bilayer. The Cytoplasmic segment spans residues 577 to 603 (FEYFSPVGYNRCLADGREPGGPSFTIG). The segment at residues 604–623 (KAIWLLWGLVFNNSVPVQNP) is an intramembrane region (discontinuously helical). Residues 604-623 (KAIWLLWGLVFNNSVPVQNP) form a pore-forming region. At 624–630 (KGTTSKI) the chain is on the cytoplasmic side. The helical transmembrane segment at 631-646 (MVSVWAFFAVIFLASY) threads the bilayer. The Extracellular portion of the chain corresponds to 647 to 817 (TANLAAFMIQ…VMSSQLDIDN (171 aa)). An N-linked (GlcNAc...) asparagine glycan is attached at Asn688. L-glutamate-binding positions include 690–691 (ST) and Asp732. Cys746 and Cys801 are disulfide-bonded. The chain crosses the membrane as a helical span at residues 818–837 (MAGVFYMLGAAMALSLITFI). The Cytoplasmic segment spans residues 838 to 1482 (CEHLFYWQFR…EKLSSIESDV (645 aa)). Residues Ser882, Ser886, Ser917, and Ser920 each carry the phosphoserine modification. Residues Tyr962 and Tyr1039 each carry the phosphotyrosine modification. 3 positions are modified to phosphoserine: Ser1058, Ser1061, and Ser1064. The interval 1074 to 1097 (EGNAAKRRKQQYKDSLKKRPASAK) is disordered. A phosphotyrosine mark is found at Tyr1109 and Tyr1133. Position 1143 is a phosphoserine (Ser1143). Tyr1155 carries the post-translational modification Phosphotyrosine. The tract at residues 1162-1194 (FKRDSVSGGGPCTNRSHLKHGTGDKHGVVGGVP) is disordered. Residues Ser1255 and Ser1259 each carry the phosphoserine modification. Residues 1266–1277 (PAAPVAVSSNAS) show a composition bias toward low complexity. Positions 1266–1301 (PAAPVAVSSNASTTKYPQSPTNSKAQKKNRNKLRRQ) are disordered. The segment covering 1278 to 1289 (TTKYPQSPTNSK) has biased composition (polar residues). Basic residues predominate over residues 1290-1301 (AQKKNRNKLRRQ). The interaction with DAPK1 stretch occupies residues 1292–1304 (KKNRNKLRRQHSY). Ser1303 is subject to Phosphoserine; by DAPK1. The residue at position 1472 (Tyr1472) is a Phosphotyrosine. Residues 1480-1482 (SDV) carry the PDZ-binding motif.

Belongs to the glutamate-gated ion channel (TC 1.A.10.1) family. NR2B/GRIN2B subfamily. As to quaternary structure, heterotetramer. Forms heterotetrameric channels composed of two GluN1/zeta subunits (GRIN1), and two identical GluN2/epsilon subunits (GRIN2A, GRIN2B, GRIN2C or GRIN2D) or GluN3 subunits (GRIN3A or GRIN3B) (in vitro). Can also form heterotetrameric channels that contain at least two GluN1 subunits and at least two different GluN2 subunits (or a combination of one GluN2 and one GluN3 subunits) (in vitro). In vivo, the subunit composition may depend on the expression levels of the different subunits. Found in a complex with GRIN1, GRIN3A and PPP2CB. Interacts with MAGI3. Interacts with HIP1 and NETO1. Interacts with PDZ domains of PATJ, DLG3 and DLG4. Interacts with DAPK1. Found in a complex with GRIN1 and PRR7. Interacts with PRR7. Interacts with CAMK2A. Interacts with ARC; preventing ARC oligomerization. Interacts with TMEM25. Interacts (via the extreme C-terminus) with FRMPD2 (via the second PDZ domain); the interaction is direct and is likely to promote NMDAR-mediated neural signal transmission. GRIN2A binds FRMPD2 with lower affinity than GRIN2B. Interacts with FAM81A; the interaction facilitates condensate formation via liquid-liquid phase separation. In terms of processing, phosphorylated on tyrosine residues. Phosphorylation at Ser-1303 by DAPK1 enhances synaptic NMDA receptor channel activity. In terms of tissue distribution, detected in brain (at protein level). Detected throughout the brain, and in brain stem trigeminal nucleus. Detected in forebrain.

The protein localises to the cell membrane. It is found in the postsynaptic cell membrane. Its subcellular location is the cell projection. The protein resides in the dendrite. It localises to the late endosome. The protein localises to the lysosome. It is found in the cytoplasm. Its subcellular location is the cytoskeleton. The enzyme catalyses Ca(2+)(in) = Ca(2+)(out). It carries out the reaction Na(+)(in) = Na(+)(out). The catalysed reaction is K(+)(in) = K(+)(out). Its function is as follows. Component of N-methyl-D-aspartate (NMDA) receptors (NMDARs) that function as heterotetrameric, ligand-gated cation channels with high calcium permeability and voltage-dependent block by Mg(2+). Participates in synaptic plasticity for learning and memory formation by contributing to the long-term depression (LTD) of hippocampus membrane currents. Channel activation requires binding of the neurotransmitter L-glutamate to the GluN2 subunit, glycine or D-serine binding to the GluN1 subunit, plus membrane depolarization to eliminate channel inhibition by Mg(2+). NMDARs mediate simultaneously the potasium efflux and the influx of calcium and sodium. Each GluN2 subunit confers differential attributes to channel properties, including activation, deactivation and desensitization kinetics, pH sensitivity, Ca2(+) permeability, and binding to allosteric modulators. In concert with DAPK1 at extrasynaptic sites, acts as a central mediator for stroke damage. Its phosphorylation at Ser-1303 by DAPK1 enhances synaptic NMDA receptor channel activity inducing injurious Ca2+ influx through them, resulting in an irreversible neuronal death. The chain is Glutamate receptor ionotropic, NMDA 2B from Mus musculus (Mouse).